The chain runs to 211 residues: Probable molybdenum cofactor guanylyltransferase (211 aa).

Residues 21–23, Lys-33, Asp-84, and Asp-116 each bind GTP; that span reads LAG. Position 116 (Asp-116) interacts with Mg(2+).

Belongs to the MobA family. Mg(2+) serves as cofactor.

Its subcellular location is the cytoplasm. The catalysed reaction is Mo-molybdopterin + GTP + H(+) = Mo-molybdopterin guanine dinucleotide + diphosphate. In terms of biological role, transfers a GMP moiety from GTP to Mo-molybdopterin (Mo-MPT) cofactor (Moco or molybdenum cofactor) to form Mo-molybdopterin guanine dinucleotide (Mo-MGD) cofactor. This is Probable molybdenum cofactor guanylyltransferase from Rhodopirellula baltica (strain DSM 10527 / NCIMB 13988 / SH1).